The primary structure comprises 200 residues: Transcriptional repressor NrdR (200 aa).

The segment at 3–34 (CPFCQNPDTKVIDTRISDDGHSIRRRRECPNC) is a zinc-finger region. An ATP-cone domain is found at 46 to 136 (LLVKKRSGNV…VYQNFEDLED (91 aa)).

Belongs to the NrdR family. It depends on Zn(2+) as a cofactor.

In terms of biological role, negatively regulates transcription of bacterial ribonucleotide reductase nrd genes and operons by binding to NrdR-boxes. This Bifidobacterium animalis subsp. lactis (strain AD011) protein is Transcriptional repressor NrdR.